We begin with the raw amino-acid sequence, 345 residues long: MLLIDIKDKELSQEEVEILEHPLVSGLILFSRNFHDKVQLEALVKSIRQRVKKPLLITVDQEGGRVQRFREGFTKLPAMQAFHTLAKNPQESTALARQTGWLMAAEMFALDIDLSFAPVLDLGHQCKAIGDRSFGENPDAMLPIAEAFIDGMREMGMATTGKHFPGHGHVLADSHLETPFDDRPKEAIFNRDILPFKQLISKGKLSAVMPAHVIYTQCDSQPASGSEYWLKQVLRNQLNFNGVIFSDDLGMKGAGFMGNFVERSEKAIHAGCDLLLLCNEPEGVIQVLDGLKYQPTKTQTERHISLMKRKTVRWNELEASPRYQQAQQRLTALQNEWLEYKAQHC.

Residues D60, R68, R132, and 162-163 contribute to the substrate site; that span reads KH. The active-site Proton donor/acceptor is H175. D247 functions as the Nucleophile in the catalytic mechanism.

Belongs to the glycosyl hydrolase 3 family. NagZ subfamily.

It is found in the cytoplasm. The catalysed reaction is Hydrolysis of terminal non-reducing N-acetyl-D-hexosamine residues in N-acetyl-beta-D-hexosaminides.. It participates in cell wall biogenesis; peptidoglycan recycling. Its function is as follows. Plays a role in peptidoglycan recycling by cleaving the terminal beta-1,4-linked N-acetylglucosamine (GlcNAc) from peptide-linked peptidoglycan fragments, giving rise to free GlcNAc, anhydro-N-acetylmuramic acid and anhydro-N-acetylmuramic acid-linked peptides. This Actinobacillus pleuropneumoniae serotype 3 (strain JL03) protein is Beta-hexosaminidase.